The chain runs to 258 residues: Imidazole glycerol phosphate synthase subunit HisF (258 aa).

Residues Asp-11 and Asp-130 contribute to the active site.

This sequence belongs to the HisA/HisF family. As to quaternary structure, heterodimer of HisH and HisF.

It localises to the cytoplasm. The enzyme catalyses 5-[(5-phospho-1-deoxy-D-ribulos-1-ylimino)methylamino]-1-(5-phospho-beta-D-ribosyl)imidazole-4-carboxamide + L-glutamine = D-erythro-1-(imidazol-4-yl)glycerol 3-phosphate + 5-amino-1-(5-phospho-beta-D-ribosyl)imidazole-4-carboxamide + L-glutamate + H(+). It participates in amino-acid biosynthesis; L-histidine biosynthesis; L-histidine from 5-phospho-alpha-D-ribose 1-diphosphate: step 5/9. IGPS catalyzes the conversion of PRFAR and glutamine to IGP, AICAR and glutamate. The HisF subunit catalyzes the cyclization activity that produces IGP and AICAR from PRFAR using the ammonia provided by the HisH subunit. The protein is Imidazole glycerol phosphate synthase subunit HisF of Blochmanniella pennsylvanica (strain BPEN).